The chain runs to 291 residues: Acetylglutamate kinase (291 aa).

Residues G61–G62, R83, and N187 each bind substrate.

Belongs to the acetylglutamate kinase family. ArgB subfamily.

Its subcellular location is the cytoplasm. The enzyme catalyses N-acetyl-L-glutamate + ATP = N-acetyl-L-glutamyl 5-phosphate + ADP. It participates in amino-acid biosynthesis; L-arginine biosynthesis; N(2)-acetyl-L-ornithine from L-glutamate: step 2/4. In terms of biological role, catalyzes the ATP-dependent phosphorylation of N-acetyl-L-glutamate. This is Acetylglutamate kinase from Methanoregula boonei (strain DSM 21154 / JCM 14090 / 6A8).